The sequence spans 151 residues: UPF0719 transmembrane protein MAP_1032c (151 aa).

A run of 4 helical transmembrane segments spans residues 20–40 (VATI…FYAV), 60–80 (AVVV…TAIA), 90–110 (LVGV…ALLA), and 130–150 (PGSF…AAAV).

It belongs to the UPF0719 family.

It localises to the cell membrane. The protein is UPF0719 transmembrane protein MAP_1032c of Mycolicibacterium paratuberculosis (strain ATCC BAA-968 / K-10) (Mycobacterium paratuberculosis).